The sequence spans 123 residues: Small ribosomal subunit protein uS11 (123 aa).

It belongs to the universal ribosomal protein uS11 family. Part of the 30S ribosomal subunit. Interacts with proteins S7 and S18. Binds to IF-3.

In terms of biological role, located on the platform of the 30S subunit, it bridges several disparate RNA helices of the 16S rRNA. Forms part of the Shine-Dalgarno cleft in the 70S ribosome. In Coxiella burnetii (strain CbuK_Q154) (Coxiella burnetii (strain Q154)), this protein is Small ribosomal subunit protein uS11.